Here is a 387-residue protein sequence, read N- to C-terminus: Pepsin A (387 aa).

The signal sequence occupies residues 1-16 (MKKLLLLLGLVALSEC). A propeptide spans 17 to 61 (LYKVPLVKKKSLRQNLIENGLLKDFLAKHNVNPASKYFPTEAATE) (activation peptide). A Peptidase A1 domain is found at 75–384 (YFGTIGIGTP…DRGNNRVGLA (310 aa)). Asp93 is a catalytic residue. Cys106 and Cys111 are joined by a disulfide. Ser129 bears the Phosphoserine mark. Cys267 and Cys271 form a disulfide bridge. Asp276 is a catalytic residue. Cys310 and Cys343 are disulfide-bonded.

Belongs to the peptidase A1 family.

The protein localises to the secreted. It carries out the reaction Preferential cleavage: hydrophobic, preferably aromatic, residues in P1 and P1' positions. Cleaves 1-Phe-|-Val-2, 4-Gln-|-His-5, 13-Glu-|-Ala-14, 14-Ala-|-Leu-15, 15-Leu-|-Tyr-16, 16-Tyr-|-Leu-17, 23-Gly-|-Phe-24, 24-Phe-|-Phe-25 and 25-Phe-|-Tyr-26 bonds in the B chain of insulin.. Functionally, shows particularly broad specificity; although bonds involving phenylalanine and leucine are preferred, many others are also cleaved to some extent. This chain is Pepsin A (PGA), found in Suncus murinus (Asian house shrew).